The sequence spans 358 residues: Nicotinate-nucleotide--dimethylbenzimidazole phosphoribosyltransferase (358 aa).

The active-site Proton acceptor is glutamate 314.

It belongs to the CobT family.

The enzyme catalyses 5,6-dimethylbenzimidazole + nicotinate beta-D-ribonucleotide = alpha-ribazole 5'-phosphate + nicotinate + H(+). Its pathway is nucleoside biosynthesis; alpha-ribazole biosynthesis; alpha-ribazole from 5,6-dimethylbenzimidazole: step 1/2. In terms of biological role, catalyzes the synthesis of alpha-ribazole-5'-phosphate from nicotinate mononucleotide (NAMN) and 5,6-dimethylbenzimidazole (DMB). The sequence is that of Nicotinate-nucleotide--dimethylbenzimidazole phosphoribosyltransferase from Mycobacterium ulcerans (strain Agy99).